Reading from the N-terminus, the 418-residue chain is Gamma-glutamyl phosphate reductase (418 aa).

Belongs to the gamma-glutamyl phosphate reductase family.

The protein resides in the cytoplasm. The enzyme catalyses L-glutamate 5-semialdehyde + phosphate + NADP(+) = L-glutamyl 5-phosphate + NADPH + H(+). Its pathway is amino-acid biosynthesis; L-proline biosynthesis; L-glutamate 5-semialdehyde from L-glutamate: step 2/2. Functionally, catalyzes the NADPH-dependent reduction of L-glutamate 5-phosphate into L-glutamate 5-semialdehyde and phosphate. The product spontaneously undergoes cyclization to form 1-pyrroline-5-carboxylate. This Desulfatibacillum aliphaticivorans protein is Gamma-glutamyl phosphate reductase.